The sequence spans 179 residues: UPF0227 protein Swoo_1808 (179 aa).

The protein belongs to the UPF0227 family.

This Shewanella woodyi (strain ATCC 51908 / MS32) protein is UPF0227 protein Swoo_1808.